The sequence spans 215 residues: Cytochrome c biogenesis ATP-binding export protein CcmA (215 aa).

The region spanning leucine 3 to arginine 211 is the ABC transporter domain. ATP is bound at residue glycine 35–serine 42.

It belongs to the ABC transporter superfamily. CcmA exporter (TC 3.A.1.107) family. In terms of assembly, the complex is composed of two ATP-binding proteins (CcmA) and two transmembrane proteins (CcmB).

The protein resides in the cell inner membrane. The catalysed reaction is heme b(in) + ATP + H2O = heme b(out) + ADP + phosphate + H(+). In terms of biological role, part of the ABC transporter complex CcmAB involved in the biogenesis of c-type cytochromes; once thought to export heme, this seems not to be the case, but its exact role is uncertain. Responsible for energy coupling to the transport system. In Rhizobium etli (strain ATCC 51251 / DSM 11541 / JCM 21823 / NBRC 15573 / CFN 42), this protein is Cytochrome c biogenesis ATP-binding export protein CcmA.